The following is a 390-amino-acid chain: uncharacterized protein (390 aa).

A run of 11 helical transmembrane segments spans residues 7-27 (IYIL…ISGI), 35-55 (LGIT…VYAL), 77-97 (LGLF…GWFI), 101-121 (IIMA…AAKI), 128-148 (GSAI…GVPL), 161-181 (VFGA…FTLP), 203-223 (VAMG…AYTY), 238-258 (LLSG…KFGG), 281-301 (LILL…LILW), 335-355 (MQFA…NVSL), and 357-377 (SITW…LLIF).

This sequence belongs to the major facilitator superfamily.

It is found in the cell membrane. This is an uncharacterized protein from Bacillus subtilis (strain 168).